A 726-amino-acid chain; its full sequence is X-ray repair cross-complementing protein 5 (726 aa).

A VWFA domain is found at 8 to 160; it reads AVVLCMDVGL…ANLKKAEITL (153 aa). The interval 137-164 is leucine-zipper; that stretch reads LSSPFSVDQLEVIIANLKKAEITLQFFL. Low complexity predominate over residues 175 to 186; sequence GSSNNRGNAGSS. The segment at 175-198 is disordered; sequence GSSNNRGNAGSSDRGCGPGKGLSD. The region spanning 253-449 is the Ku domain; it reads GSSLSIRIVG…NKKFTPTESQ (197 aa). Residues 714-722 carry the EEXXXDL motif motif; the sequence is EDEGDVDDL.

The protein belongs to the ku80 family. Heterodimer composed of xrcc5/Ku80 and xrcc6/Ku70. Post-translationally, ubiquitinated via 'Lys-48'-linked polyubiquitination at DNA double strand break sites (DSBs), leading to its release from DSBs and subsequent proteasomal degradation. Polyubiquitination is not required for completion of NHEJ. Expressed at high levels in oocyte and testis.

It is found in the nucleus. Its function is as follows. Single-stranded DNA-dependent ATP-dependent helicase that plays a key role in DNA non-homologous end joining (NHEJ). This is X-ray repair cross-complementing protein 5 from Xenopus laevis (African clawed frog).